We begin with the raw amino-acid sequence, 507 residues long: Cytochrome P450 monooxygenase tpeC (507 aa).

The chain crosses the membrane as a helical span at residues 24–44 (TLAIALIVGFVILKAIYNVFF). Cysteine 449 provides a ligand contact to heme.

It belongs to the cytochrome P450 family. Heme is required as a cofactor.

It localises to the membrane. It participates in secondary metabolite biosynthesis. Its function is as follows. Cytochrome P450 monooxygenase; part of the gene cluster that mediates the biosynthesis of polyesters containing 2,4-dihydroxy-6-(2-hydroxypropyl)benzoate and 3-hydroxybutyrate moieties, such as talapolyester G, 15G256beta and 15G256beta-2; as well as to oxidized derivatives such as 15G256alpha. The biosynthesis of the polyesters probably starts with the formation of the diketide 3-hydroxybutyryl-S-ACP catalyzed by the partially reducing polyketide synthase tpeA. The acceptance of 3-hydroxybutyryl by the non-reducing polyketide synthase tpeB would initiate further elongation and cyclization, catalyzed by KS and PT, respectively, to form 2,4-dihydroxy-6-(2-hydroxyn-propyl)benzoyl-S-ACP intermediate. The TE domain could catalyze lactonization at this step to yield 6-hydroxymellein as a derailment product. The polyesterification process maybe occurs when additional molecules of 3-hydroxybutyryl are transferred to tpeB. Following the first esterification step, an intramolecular cyclization catalyzed by the TE domain of tpeB would give talarodioxadione 1, whereas the ethyl esterification of talapolyester G perhaps happens spontaneously. Further oxidation by the cytochrome P450 monooxygenase tpeC then leads to the formation of oxidized derivatives. This chain is Cytochrome P450 monooxygenase tpeC, found in Talaromyces stipitatus (strain ATCC 10500 / CBS 375.48 / QM 6759 / NRRL 1006) (Penicillium stipitatum).